The chain runs to 283 residues: uncharacterized protein (283 aa).

Residues Met-1 to Ala-25 form the signal peptide. Cys-26 carries the N-palmitoyl cysteine lipid modification. A lipid anchor (S-diacylglycerol cysteine) is attached at Cys-26.

The protein belongs to the MG439/MG440 family.

It is found in the cell membrane. This is an uncharacterized protein from Mycoplasma pneumoniae (strain ATCC 29342 / M129 / Subtype 1) (Mycoplasmoides pneumoniae).